A 115-amino-acid polypeptide reads, in one-letter code: T cell receptor beta variable 7-4 (115 aa).

An N-terminal signal peptide occupies residues 1–21; it reads MGTRLLCWVVLGFLGTDHTGA. One can recognise an Ig-like domain in the interval 22–115; it reads GVSQSPRYKV…SAVYLCASSL (94 aa). A disulfide bond links C42 and C111. The segment at 67-97 is disordered; the sequence is YSQSDAQRDKSGRPSGRFSAERPERSVSTLK.

As to quaternary structure, alpha-beta TR is a heterodimer composed of an alpha and beta chain; disulfide-linked. The alpha-beta TR is associated with the transmembrane signaling CD3 coreceptor proteins to form the TR-CD3 (TcR or TCR). The assembly of alpha-beta TR heterodimers with CD3 occurs in the endoplasmic reticulum where a single alpha-beta TR heterodimer associates with one CD3D-CD3E heterodimer, one CD3G-CD3E heterodimer and one CD247 homodimer forming a stable octameric structure. CD3D-CD3E and CD3G-CD3E heterodimers preferentially associate with TR alpha and TR beta chains, respectively. The association of the CD247 homodimer is the last step of TcR assembly in the endoplasmic reticulum and is required for transport to the cell surface.

The protein resides in the cell membrane. V region of the variable domain of T cell receptor (TR) beta chain that participates in the antigen recognition. Alpha-beta T cell receptors are antigen specific receptors which are essential to the immune response and are present on the cell surface of T lymphocytes. Recognize peptide-major histocompatibility (MH) (pMH) complexes that are displayed by antigen presenting cells (APC), a prerequisite for efficient T cell adaptive immunity against pathogens. Binding of alpha-beta TR to pMH complex initiates TR-CD3 clustering on the cell surface and intracellular activation of LCK that phosphorylates the ITAM motifs of CD3G, CD3D, CD3E and CD247 enabling the recruitment of ZAP70. In turn ZAP70 phosphorylates LAT, which recruits numerous signaling molecules to form the LAT signalosome. The LAT signalosome propagates signal branching to three major signaling pathways, the calcium, the mitogen-activated protein kinase (MAPK) kinase and the nuclear factor NF-kappa-B (NF-kB) pathways, leading to the mobilization of transcription factors that are critical for gene expression and essential for T cell growth and differentiation. The T cell repertoire is generated in the thymus, by V-(D)-J rearrangement. This repertoire is then shaped by intrathymic selection events to generate a peripheral T cell pool of self-MH restricted, non-autoaggressive T cells. Post-thymic interaction of alpha-beta TR with the pMH complexes shapes TR structural and functional avidity. The polypeptide is T cell receptor beta variable 7-4 (Homo sapiens (Human)).